Reading from the N-terminus, the 359-residue chain is 3-dehydroquinate synthase (359 aa).

NAD(+)-binding positions include 69–74 (DGEAYK), 103–107 (GVIGD), 127–128 (TT), K140, K149, and 167–170 (CLKT). Zn(2+)-binding residues include E182, H245, and H262.

This sequence belongs to the sugar phosphate cyclases superfamily. Dehydroquinate synthase family. It depends on Co(2+) as a cofactor. The cofactor is Zn(2+). Requires NAD(+) as cofactor.

It is found in the cytoplasm. The enzyme catalyses 7-phospho-2-dehydro-3-deoxy-D-arabino-heptonate = 3-dehydroquinate + phosphate. The protein operates within metabolic intermediate biosynthesis; chorismate biosynthesis; chorismate from D-erythrose 4-phosphate and phosphoenolpyruvate: step 2/7. Functionally, catalyzes the conversion of 3-deoxy-D-arabino-heptulosonate 7-phosphate (DAHP) to dehydroquinate (DHQ). The protein is 3-dehydroquinate synthase of Aeromonas salmonicida (strain A449).